A 650-amino-acid polypeptide reads, in one-letter code: Chaperone protein HtpG (650 aa).

The segment at 1 to 349 (MTKTTKKFET…SSDLPLNVSR (349 aa)) is a; substrate-binding. The tract at residues 350 to 566 (EILQEDVQIK…EHGLNANMER (217 aa)) is b. The segment at 567–650 (ILRAMNQDVP…VADGKAAAGE (84 aa)) is c.

Belongs to the heat shock protein 90 family. In terms of assembly, homodimer.

The protein localises to the cytoplasm. Functionally, molecular chaperone. Has ATPase activity. This is Chaperone protein HtpG from Geobacter metallireducens (strain ATCC 53774 / DSM 7210 / GS-15).